A 294-amino-acid polypeptide reads, in one-letter code: Elongation factor Ts (294 aa).

The segment at 81 to 84 (TDFV) is involved in Mg(2+) ion dislocation from EF-Tu.

The protein belongs to the EF-Ts family.

It is found in the cytoplasm. In terms of biological role, associates with the EF-Tu.GDP complex and induces the exchange of GDP to GTP. It remains bound to the aminoacyl-tRNA.EF-Tu.GTP complex up to the GTP hydrolysis stage on the ribosome. This is Elongation factor Ts (tsf) from Mycoplasmopsis pulmonis (strain UAB CTIP) (Mycoplasma pulmonis).